A 473-amino-acid polypeptide reads, in one-letter code: Glutamine synthetase (473 aa).

One can recognise a GS beta-grasp domain in the interval 18–102 (NNIKWVDLQF…VLTKVFWGGG (85 aa)). Residues 110–473 (PRGIAEEAEK…PMEIYQYLDS (364 aa)) enclose the GS catalytic domain. Glu133 and Glu135 together coordinate Mg(2+). Glu207 provides a ligand contact to ATP. 2 residues coordinate Mg(2+): Glu212 and Glu220. Residues 264–265 (NG) and Gly265 contribute to the L-glutamate site. His269 is a binding site for Mg(2+). ATP is bound by residues 271–273 (HFS) and Ser273. L-glutamate-binding residues include Arg324, Glu330, and Arg342. Residues Arg342, Arg347, and Lys357 each contribute to the ATP site. Position 362 (Glu362) interacts with Mg(2+). L-glutamate is bound at residue Arg364.

This sequence belongs to the glutamine synthetase family. As to quaternary structure, oligomer of 12 subunits arranged in the form of two hexagons. Requires Mg(2+) as cofactor. Mn(2+) is required as a cofactor.

The protein resides in the cytoplasm. It catalyses the reaction L-glutamate + NH4(+) + ATP = L-glutamine + ADP + phosphate + H(+). Strongly inhibited by glycine and L-alanine. AMP at 10 mM displays a very weak inhibitory effect. The activity of this enzyme is not controlled by adenylation. Functionally, probably involved in nitrogen metabolism via ammonium assimilation. Catalyzes the ATP-dependent biosynthesis of glutamine from glutamate and ammonia. The protein is Glutamine synthetase of Sulfolobus acidocaldarius (strain ATCC 33909 / DSM 639 / JCM 8929 / NBRC 15157 / NCIMB 11770).